Here is a 215-residue protein sequence, read N- to C-terminus: Probable transaldolase (215 aa).

Lys-83 acts as the Schiff-base intermediate with substrate in catalysis.

It belongs to the transaldolase family. Type 3B subfamily.

Its subcellular location is the cytoplasm. The enzyme catalyses D-sedoheptulose 7-phosphate + D-glyceraldehyde 3-phosphate = D-erythrose 4-phosphate + beta-D-fructose 6-phosphate. The protein operates within carbohydrate degradation; pentose phosphate pathway; D-glyceraldehyde 3-phosphate and beta-D-fructose 6-phosphate from D-ribose 5-phosphate and D-xylulose 5-phosphate (non-oxidative stage): step 2/3. Transaldolase is important for the balance of metabolites in the pentose-phosphate pathway. In Methanococcus maripaludis (strain DSM 14266 / JCM 13030 / NBRC 101832 / S2 / LL), this protein is Probable transaldolase.